We begin with the raw amino-acid sequence, 208 residues long: Proheparin-binding EGF-like growth factor (208 aa).

The N-terminal stretch at 1–23 is a signal peptide; the sequence is MKLLPSVVLKLFLAAVLSALVTG. Positions 24-62 are excised as a propeptide; that stretch reads ESLERLRRGLAAATSNPDPPTGTTNQLLPTGADRAQEVQ. Over 24–160 the chain is Extracellular; sequence ESLERLRRGL…ENPLYTYDHT (137 aa). Positions 82–103 are disordered; the sequence is ALATPGKEKNGKKKRKGKGLGK. Residue Thr-85 is glycosylated (O-linked (GalNAc...) threonine). Residues 91–102 are compositionally biased toward basic residues; the sequence is NGKKKRKGKGLG. Residues 104–144 form the EGF-like domain; sequence KRDPCLKKYKDYCIHGECRYLKELRIPSCHCLPGYHGQRCH. 3 disulfides stabilise this stretch: Cys-108/Cys-121, Cys-116/Cys-132, and Cys-134/Cys-143. Residues 149–208 constitute a propeptide, C-terminal; the sequence is PVENPLYTYDHTTVLAVVAVVLSSVCLLVIVGLLMFRYHRRGGYDLESEEKVKLGMASSH. The chain crosses the membrane as a helical span at residues 161 to 184; sequence TVLAVVAVVLSSVCLLVIVGLLMF. Topologically, residues 185-208 are cytoplasmic; that stretch reads RYHRRGGYDLESEEKVKLGMASSH.

In terms of assembly, interacts with FBLN1. Interacts with EGFR and ERBB4. O-glycosylated. As to expression, most abundant in skeletal muscle, lung, spleen brain and heart.

The protein localises to the secreted. The protein resides in the extracellular space. It localises to the cell membrane. In terms of biological role, growth factor that mediates its effects via EGFR, ERBB2 and ERBB4. Required for normal cardiac valve formation and normal heart function. Promotes smooth muscle cell proliferation. May be involved in macrophage-mediated cellular proliferation. It is mitogenic for fibroblasts, but not endothelial cells. It is able to bind EGF receptor/EGFR with higher affinity than EGF itself and is a far more potent mitogen for smooth muscle cells than EGF. Also acts as a diphtheria toxin receptor. The chain is Proheparin-binding EGF-like growth factor (Hbegf) from Rattus norvegicus (Rat).